Here is a 403-residue protein sequence, read N- to C-terminus: SEC14-like protein 4 (403 aa).

The CRAL-TRIO domain occupies 76–249; it reads APEVIQLYDS…EFGGTMTDPD (174 aa). In terms of domain architecture, GOLD spans 275–383; sequence RPQYEHSVVV…TKKVGYTAEV (109 aa).

In terms of biological role, probable hydrophobic ligand-binding protein; may play a role in the transport of hydrophobic ligands like tocopherol, squalene and phospholipids. This Mus musculus (Mouse) protein is SEC14-like protein 4 (Sec14l4).